The following is a 416-amino-acid chain: Fusaric acid cluster transcription factor FUB10 (416 aa).

A DNA-binding region (zn(2)-C6 fungal-type) is located at residues 16–47 (CDRCRAQKLRCHRDSGHSTDACLRCLKSGIEC). The segment at 50 to 92 (SKARPTGRPPSRQVQPTVSVEQGDTSSSSHTTDSSPSAGGTDI) is disordered. The span at 61 to 73 (RQVQPTVSVEQGD) shows a compositional bias: polar residues. Residues 74–86 (TSSSSHTTDSSPS) show a composition bias toward low complexity.

It is found in the nucleus. Functionally, transcription factor that regulates the expression of the gene cluster that mediates the biosynthesis of fusaric acid, a mycotoxin with low to moderate toxicity to animals and humans, but with high phytotoxic properties. The sequence is that of Fusaric acid cluster transcription factor FUB10 from Fusarium oxysporum f. sp. lycopersici (strain 4287 / CBS 123668 / FGSC 9935 / NRRL 34936) (Fusarium vascular wilt of tomato).